A 628-amino-acid chain; its full sequence is MAKAVGIDLGTTNSVISVMEGGRPEVIVNAEGGRTTPSVVAYKGDERLVGQIARRQAALNPAATLFEVKRFIGRRWDEVKEEAARSPFKVKEGPGGSVRIEVNGQDLAPEQVSAEVLRKLVSDASAKLGQKITDAVITVPAYFDNSQREATKQAGEIAGLNVLRVINEPTAAALAYGLERKGNETVLVFDLGGGTFDVTILELGDGVFEVKSTAGDTHLGGADFDHRIVDWLAEEFNREHNFDLRKDKQALQRLIEAAEKAKIDLSNASESSISLPFITFDPETRTPMHLERTLSRAKFEELTADLLRRVRKPVEQALADAKLSASDIDEVILVGGSTRIPAVKRIVQDLVGKTPNESVNPDEAVALGAAVQAGIIQGDSALGDIVLVDVTPLTLGVEVKGGMIAPMITRNTTVPAKKTEIYTTAENNQPGVEINVLQGERPMASDNKSLGRFKLEGIPPMRAGQAQIEVTFDIDANGILHVTAKEKTSGKEASIRIENTTTLDKSDVERMVREAEENAAADKLRREKVEKRNNLDSLRVQATQQLEENEGAAQDAKDALKAAADEAEEAVRSEDDARIESAQKRLEEELRTFMTAQQAAGQGQPQGAQAQGTKADDDVIDADFKAAE.

Thr195 carries the post-translational modification Phosphothreonine; by autocatalysis. A disordered region spans residues 545–628 (QLEENEGAAQ…VIDADFKAAE (84 aa)). Residues 555 to 591 (DAKDALKAAADEAEEAVRSEDDARIESAQKRLEEELR) show a composition bias toward basic and acidic residues. Residues 596–612 (AQQAAGQGQPQGAQAQG) show a composition bias toward low complexity. The span at 614 to 628 (KADDDVIDADFKAAE) shows a compositional bias: basic and acidic residues.

It belongs to the heat shock protein 70 family.

Its function is as follows. Acts as a chaperone. This is Chaperone protein DnaK from Deinococcus deserti (strain DSM 17065 / CIP 109153 / LMG 22923 / VCD115).